The sequence spans 196 residues: Glycerol-3-phosphate acyltransferase (196 aa).

5 helical membrane passes run 2–22 (GWWL…SYLI), 51–71 (VVGG…VFIA), 80–100 (LVSL…FMKF), 112–132 (IIFC…LVIV), and 137–156 (YASL…GYLF).

It belongs to the PlsY family. Probably interacts with PlsX.

The protein localises to the cell inner membrane. It carries out the reaction an acyl phosphate + sn-glycerol 3-phosphate = a 1-acyl-sn-glycero-3-phosphate + phosphate. The protein operates within lipid metabolism; phospholipid metabolism. In terms of biological role, catalyzes the transfer of an acyl group from acyl-phosphate (acyl-PO(4)) to glycerol-3-phosphate (G3P) to form lysophosphatidic acid (LPA). This enzyme utilizes acyl-phosphate as fatty acyl donor, but not acyl-CoA or acyl-ACP. This Thermotoga petrophila (strain ATCC BAA-488 / DSM 13995 / JCM 10881 / RKU-1) protein is Glycerol-3-phosphate acyltransferase.